Reading from the N-terminus, the 415-residue chain is Serine hydroxymethyltransferase (415 aa).

(6S)-5,6,7,8-tetrahydrofolate contacts are provided by residues Leu-122 and 126-128; that span reads GHL. Lys-230 is modified (N6-(pyridoxal phosphate)lysine).

Belongs to the SHMT family. In terms of assembly, homodimer. It depends on pyridoxal 5'-phosphate as a cofactor.

The protein resides in the cytoplasm. It carries out the reaction (6R)-5,10-methylene-5,6,7,8-tetrahydrofolate + glycine + H2O = (6S)-5,6,7,8-tetrahydrofolate + L-serine. The protein operates within one-carbon metabolism; tetrahydrofolate interconversion. Its pathway is amino-acid biosynthesis; glycine biosynthesis; glycine from L-serine: step 1/1. Catalyzes the reversible interconversion of serine and glycine with tetrahydrofolate (THF) serving as the one-carbon carrier. This reaction serves as the major source of one-carbon groups required for the biosynthesis of purines, thymidylate, methionine, and other important biomolecules. Also exhibits THF-independent aldolase activity toward beta-hydroxyamino acids, producing glycine and aldehydes, via a retro-aldol mechanism. The protein is Serine hydroxymethyltransferase of Cupriavidus necator (strain ATCC 17699 / DSM 428 / KCTC 22496 / NCIMB 10442 / H16 / Stanier 337) (Ralstonia eutropha).